We begin with the raw amino-acid sequence, 351 residues long: Protein arginine N-methyltransferase 1 (351 aa).

Positions 30-331 (KDYYFDSYAH…KNNRDLDFTV (302 aa)) constitute an SAM-dependent MTase PRMT-type domain. 5 residues coordinate S-adenosyl-L-methionine: His43, Arg52, Gly76, Glu98, and Glu127. Active-site residues include Glu142 and Glu151.

Belongs to the class I-like SAM-binding methyltransferase superfamily. Protein arginine N-methyltransferase family. Homodimer. Homooctamer; individual homodimers associates to form a homooctamer and homooligomerization is required for proper localization to the cell membrane. Individual homodimers can associate to form a homohexamer. Component of a complex with lsm14a/rap55a. Interacts with cirbp.

Its subcellular location is the nucleus. The protein resides in the nucleoplasm. It localises to the cytoplasm. It is found in the cytosol. The enzyme catalyses L-arginyl-[protein] + 2 S-adenosyl-L-methionine = N(omega),N(omega)-dimethyl-L-arginyl-[protein] + 2 S-adenosyl-L-homocysteine + 2 H(+). The catalysed reaction is L-arginyl-[protein] + S-adenosyl-L-methionine = N(omega)-methyl-L-arginyl-[protein] + S-adenosyl-L-homocysteine + H(+). It carries out the reaction N(omega)-methyl-L-arginyl-[protein] + S-adenosyl-L-methionine = N(omega),N(omega)-dimethyl-L-arginyl-[protein] + S-adenosyl-L-homocysteine + H(+). Arginine methyltransferase that methylates (mono and asymmetric dimethylation) the guanidino nitrogens of arginyl residues present in target proteins. Constitutes the main enzyme that mediates monomethylation and asymmetric dimethylation of histone H4 'Arg-3' (H4R3me1 and H4R3me2a, respectively), a specific tag for epigenetic transcriptional activation. Methylates ilf3 to regulate its DNA-binding activity. Required for neural induction, playing a key role in the control of epidermal versus neural cell fate choice. Methylates cirbp to regulate its subcellular location. Acts transiently during metamorphosis as a transcription coactivator, enhancing thyroid hormone (T3) receptor (TR)-mediated transcription by enhancing TR binding to the T3 response element (TRE), and histone modification through recruitment of other coactivators. The chain is Protein arginine N-methyltransferase 1 from Xenopus tropicalis (Western clawed frog).